The chain runs to 363 residues: Spindle pole body component SPC42 (363 aa).

Residues 60–137 (EFINKAVQQN…ANSTFKEMRF (78 aa)) are a coiled coil. The interval 160-184 (PKHRAPDATGNPRTTNKVSNTSDQD) is disordered. The span at 170-182 (NPRTTNKVSNTSD) shows a compositional bias: polar residues. Phosphoserine occurs at positions 213, 217, 284, and 329. Residues 249–298 (DIMMYESAELKRVEEEIEELKRKILVRKKHDLRKLSLNNQLQELQSMMDG) are a coiled coil. Residues 310 to 363 (HNHATHRHSSQSSRDYSPSSDACLECSNDLYEKNRVKPENNMSETFATPTPNNR) are disordered. Over residues 319–329 (SQSSRDYSPSS) the composition is skewed to low complexity. The segment covering 349–363 (NNMSETFATPTPNNR) has biased composition (polar residues).

The protein belongs to the SPC42 family. As to quaternary structure, component of the SPC110 complex containing at least CMD1, SPC29, SPC42 and SCP110.

The protein resides in the nucleus. Its subcellular location is the cytoplasm. It localises to the cytoskeleton. It is found in the microtubule organizing center. The protein localises to the spindle pole body. In terms of biological role, forms a polymeric layer at the periphery of the spindle pole body (SPB) central plaque which has an essential function during SPB duplication and may facilitate attachment of the SPB to the nuclear membrane. This Saccharomyces cerevisiae (strain ATCC 204508 / S288c) (Baker's yeast) protein is Spindle pole body component SPC42 (SPC42).